A 552-amino-acid polypeptide reads, in one-letter code: MLQLNENKQFAFFQRLAFPLRIFLLILVFSIFVIAALAQYFTASFEDYLTLHVRDMAMNQAKIIASNDSVISAVKTRDYKRLATIANKLQRDTDFDYVVIGDRHSIRLYHPNPEKIGYPMQFTKQGALEKGESYFITGKGSMGMAMRAKTPIFDDDGKVIGVVSIGYLVSKIDSWRAEFLLPMAGVFVVLLGILMLLSWFLAAHIRRQMMGMEPKQIARVVRQQEALFSSVYEGLIAVDPHGYITAINRNARKMLGLSSPGRQWLGKPIVEVVRPADFFTEQIDEKRQDVVANFNGLSVIANREAIRSGDDLLGAIISFRSKDEISTLNAQLTQIKQYVESLRTLRHEHLNWMSTLNGLLQMKEYDRVLAMVQGESQAQQQLIDSLREAFADRQVAGLLFGKVQRARELGLKMIIVPGSQLSQLPPGLDSTEFAAIVGNLLDNAFEASLRSDEGNKIVELFLSDEGDDVVIEVADQGCGVPESLRDKIFEQGVSTRADEPGEHGIGLYLIASYVTRCGGVITLEDNDPCGTLFSIYIPKVKPNDSSINPIDR.

The Cytoplasmic portion of the chain corresponds to 1 to 21 (MLQLNENKQFAFFQRLAFPLR). A helical membrane pass occupies residues 22–42 (IFLLILVFSIFVIAALAQYFT). The Periplasmic portion of the chain corresponds to 43–182 (ASFEDYLTLH…DSWRAEFLLP (140 aa)). Residues 183-203 (MAGVFVVLLGILMLLSWFLAA) traverse the membrane as a helical segment. The Cytoplasmic portion of the chain corresponds to 204-552 (HIRRQMMGME…NDSSINPIDR (349 aa)). In terms of domain architecture, PAS spans 222–292 (RQQEALFSSV…IDEKRQDVVA (71 aa)). In terms of domain architecture, Histidine kinase spans 344-541 (TLRHEHLNWM…LFSIYIPKVK (198 aa)). Histidine 347 carries the post-translational modification Phosphohistidine; by autocatalysis.

Post-translationally, autophosphorylated.

It is found in the cell inner membrane. The catalysed reaction is ATP + protein L-histidine = ADP + protein N-phospho-L-histidine.. Its activity is regulated as follows. Autophosphorylation is induced in vitro by dithiothreitol (DTT). Functionally, member of the two-component regulatory system DpiA/DpiB, which is essential for expression of citrate-specific fermentation genes and genes involved in plasmid inheritance. Could be involved in response to both the presence of citrate and external redox conditions. Functions as a sensor kinase that phosphorylates DpiA in the presence of citrate. In Escherichia coli (strain K12), this protein is Sensor histidine kinase DpiB (dpiB).